A 154-amino-acid polypeptide reads, in one-letter code: Toxin YhaV (154 aa).

As to quaternary structure, homohexamer; forms a complex with PrlF (SohA) with stoichiometry PrlF(2)-YhaV(4), possibly as a YhaV(2)-PrlF(2)-YhaV(2) complex like the MazFE complex. May dimerize in solution.

Functionally, toxic component of a type II toxin-antitoxin (TA) system. Has RNase activity in vitro. Acts as a transcription factor. The YhaV/PrlF complex binds the prlF-yhaV operon, probably negatively regulating its expression. This chain is Toxin YhaV (yhaV), found in Escherichia coli O6:H1 (strain CFT073 / ATCC 700928 / UPEC).